The following is a 281-amino-acid chain: Large ribosomal subunit protein uL2 (281 aa).

2 disordered regions span residues 1–23 and 224–281; these read MAVK…DYSK and RGSV…KDSK. The span at 12 to 23 shows a compositional bias: polar residues; it reads GRRNMSSLDYSK. Positions 261-281 are enriched in basic residues; it reads KTRKTKKSSTKLILRRRKDSK.

This sequence belongs to the universal ribosomal protein uL2 family. In terms of assembly, part of the 50S ribosomal subunit. Forms a bridge to the 30S subunit in the 70S ribosome.

One of the primary rRNA binding proteins. Required for association of the 30S and 50S subunits to form the 70S ribosome, for tRNA binding and peptide bond formation. It has been suggested to have peptidyltransferase activity; this is somewhat controversial. Makes several contacts with the 16S rRNA in the 70S ribosome. This Mycoplasmopsis agalactiae (strain NCTC 10123 / CIP 59.7 / PG2) (Mycoplasma agalactiae) protein is Large ribosomal subunit protein uL2.